The sequence spans 213 residues: MADNKPYKSYFLDPLWNNNQPLIAILGICSALAVTTTVKTAITMGLAVSFVTGCSSFFVSLLRKITPDSVRMITQLIIISLFVIVIDQFLKAFFFNISKTLSVFVGLIITNCIVMGRAESLARNVPPIPAFLDGLASGLGYGWVLVFVSIIREFFGFGTLLGLQLIPKCFYASEAHPDGYENFGLMVLAPSAFFLLGIMIWVVNILRSKKAKR.

6 helical membrane passes run 21 to 41, 42 to 62, 77 to 97, 101 to 121, 131 to 151, and 183 to 203; these read PLIAILGICSALAVTTTVKTA, ITMGLAVSFVTGCSSFFVSLL, IIISLFVIVIDQFLKAFFFNI, LSVFVGLIITNCIVMGRAESL, FLDGLASGLGYGWVLVFVSII, and FGLMVLAPSAFFLLGIMIWVV.

It belongs to the NqrDE/RnfAE family. In terms of assembly, composed of six subunits; NqrA, NqrB, NqrC, NqrD, NqrE and NqrF.

The protein localises to the cell inner membrane. It carries out the reaction a ubiquinone + n Na(+)(in) + NADH + H(+) = a ubiquinol + n Na(+)(out) + NAD(+). In terms of biological role, NQR complex catalyzes the reduction of ubiquinone-1 to ubiquinol by two successive reactions, coupled with the transport of Na(+) ions from the cytoplasm to the periplasm. NqrA to NqrE are probably involved in the second step, the conversion of ubisemiquinone to ubiquinol. This Chlamydia felis (strain Fe/C-56) (Chlamydophila felis) protein is Na(+)-translocating NADH-quinone reductase subunit D.